Here is a 246-residue protein sequence, read N- to C-terminus: Outer membrane protein assembly factor BamD (246 aa).

The signal sequence occupies residues 1 to 22 (MKKKNSIIFVFMILFFNSTVQS).

This sequence belongs to the BamD family. As to quaternary structure, part of the Bam complex.

The protein localises to the cell outer membrane. In terms of biological role, part of the outer membrane protein assembly complex, which is involved in assembly and insertion of beta-barrel proteins into the outer membrane. This Buchnera aphidicola subsp. Acyrthosiphon pisum (strain APS) (Acyrthosiphon pisum symbiotic bacterium) protein is Outer membrane protein assembly factor BamD.